Reading from the N-terminus, the 248-residue chain is ATP synthase subunit a (248 aa).

Helical transmembrane passes span 25 to 45 (IAFT…AVMM), 83 to 103 (FFPL…VGII), 113 to 133 (LIVT…YGLA), 142 to 162 (LFVP…IEVI), 192 to 212 (FIAM…LPLG), and 215 to 235 (IALT…FAIL).

The protein belongs to the ATPase A chain family. In terms of assembly, F-type ATPases have 2 components, CF(1) - the catalytic core - and CF(0) - the membrane proton channel. CF(1) has five subunits: alpha(3), beta(3), gamma(1), delta(1), epsilon(1). CF(0) has four main subunits: a, b, b' and c.

The protein localises to the cell inner membrane. Key component of the proton channel; it plays a direct role in the translocation of protons across the membrane. This Rhodopseudomonas palustris (strain HaA2) protein is ATP synthase subunit a.